A 371-amino-acid chain; its full sequence is Fructose-1,6-bisphosphatase class 1 1 (371 aa).

Positions 115, 134, 136, and 137 each coordinate Mg(2+). Substrate is bound by residues 137–140 (DGSS), Asn228, and 280–282 (YLY). Position 300 (Glu300) interacts with Mg(2+).

The protein belongs to the FBPase class 1 family. Homotetramer. Mg(2+) serves as cofactor.

It is found in the cytoplasm. It catalyses the reaction beta-D-fructose 1,6-bisphosphate + H2O = beta-D-fructose 6-phosphate + phosphate. It functions in the pathway carbohydrate biosynthesis; gluconeogenesis. The sequence is that of Fructose-1,6-bisphosphatase class 1 1 from Xanthobacter autotrophicus (strain ATCC BAA-1158 / Py2).